A 437-amino-acid polypeptide reads, in one-letter code: Aspartate aminotransferase, mitochondrial (437 aa).

3 residues coordinate L-aspartate: Gly-72, Trp-167, and Asn-220. Lys-284 is modified (N6-(pyridoxal phosphate)lysine). L-aspartate is bound at residue Arg-413.

The protein belongs to the class-I pyridoxal-phosphate-dependent aminotransferase family. Homodimer. Pyridoxal 5'-phosphate is required as a cofactor.

The protein resides in the mitochondrion matrix. The enzyme catalyses L-aspartate + 2-oxoglutarate = oxaloacetate + L-glutamate. Plays a key role in amino acid metabolism. Important for metabolite exchange between mitochondria and cytosol. The chain is Aspartate aminotransferase, mitochondrial from Schizosaccharomyces pombe (strain 972 / ATCC 24843) (Fission yeast).